The sequence spans 276 residues: Urease accessory protein UreD (276 aa).

It belongs to the UreD family. As to quaternary structure, ureD, UreF and UreG form a complex that acts as a GTP-hydrolysis-dependent molecular chaperone, activating the urease apoprotein by helping to assemble the nickel containing metallocenter of UreC. The UreE protein probably delivers the nickel.

Its subcellular location is the cytoplasm. Its function is as follows. Required for maturation of urease via the functional incorporation of the urease nickel metallocenter. In Bradyrhizobium diazoefficiens (strain JCM 10833 / BCRC 13528 / IAM 13628 / NBRC 14792 / USDA 110), this protein is Urease accessory protein UreD.